The sequence spans 542 residues: Leucine-rich repeat-containing protein 56 (542 aa).

5 LRR repeats span residues 94–115 (NLDQ…GTSL), 117–138 (HLQV…ASLP), 139–160 (ALKE…CLLE), 161–182 (QLEV…RYLQ), and 186–206 (RLAM…PGPT). The region spanning 207–250 (NKVPRGYNYRAEVRKLIPQLQVLDEVPAAHTGPPAPPRLSQDWL) is the LRRCT domain. Disordered regions lie at residues 308–377 (LLSE…ADSS), 396–475 (LPYR…LQSR), and 507–542 (RLSP…PVPT). Residues 416–426 (RVPEEQVHQAE) show a composition bias toward basic and acidic residues. The segment covering 522–532 (PDAAARPPRAA) has biased composition (low complexity).

This sequence belongs to the LRRC56 family. As to quaternary structure, interacts with IFT88.

The protein localises to the cell projection. It is found in the cilium. Its function is as follows. Required for the assembly of dynein arms. The polypeptide is Leucine-rich repeat-containing protein 56 (LRRC56) (Homo sapiens (Human)).